The primary structure comprises 173 residues: Translationally-controlled tumor protein homolog (173 aa).

The TCTP domain occupies methionine 1 to valine 173.

It belongs to the TCTP family.

The protein localises to the cytoplasm. The protein resides in the cytoskeleton. Its function is as follows. Involved in protein synthesis. Involved in microtubule stabilization. The sequence is that of Translationally-controlled tumor protein homolog from Aspergillus oryzae (strain ATCC 42149 / RIB 40) (Yellow koji mold).